We begin with the raw amino-acid sequence, 442 residues long: C4-dicarboxylate transport protein (442 aa).

The next 8 helical transmembrane spans lie at Q19 to P39, L55 to M75, A90 to V110, I161 to A181, L199 to I219, W232 to V252, I318 to G338, and A366 to V386.

This sequence belongs to the dicarboxylate/amino acid:cation symporter (DAACS) (TC 2.A.23) family.

The protein resides in the cell inner membrane. In terms of biological role, responsible for the transport of dicarboxylates such as succinate, fumarate, and malate from the periplasm across the membrane. The polypeptide is C4-dicarboxylate transport protein (Delftia acidovorans (strain DSM 14801 / SPH-1)).